The following is a 309-amino-acid chain: SERTA domain-containing protein 2 (309 aa).

3 disordered regions span residues 1 to 30, 79 to 114, and 175 to 220; these read MLGK…GPSR, EGSL…CDLG, and PTST…MDSL. Residues 8-18 are compositionally biased toward basic and acidic residues; sequence RKFDEHEDGLE. Residues 33–80 form the SERTA domain; sequence YTLQRQTIFNISLMKLYNHRPLTEPSLQKTVLINNMLRRIQEELKQEG. Composition is skewed to low complexity over residues 89-99 and 175-189; these read SSQPSNSLSDS and PTST…AAPE. A compositionally biased stretch (basic and acidic residues) spans 204–216; sequence EGPEEGRTDDSRF. Residues 230 to 306 form a required for transactivation activity region; it reads TGFLTDLTLD…TELDHIMEVL (77 aa). Residues 233-238 carry the Nuclear export signal (NES) motif; it reads LTDLTL.

Interacts with XPO1; which mediates nuclear export. Interacts with TFDP1; modulates transactivation activity of TFDP1/E2F complexes. Post-translationally, polyubiquitinated, which promotes proteasomal degradation. In terms of tissue distribution, expressed in white and brown adipose tissue.

It localises to the nucleus. The protein localises to the cytoplasm. Functionally, acts at E2F-responsive promoters as coregulator to integrate signals provided by PHD- and/or bromodomain-containing transcription factors. May act as coactivator as well as corepressor of E2F1-TFDP1 and E2F4-TFDP1 complexes on E2F consensus binding sites, which would activate or inhibit E2F-target genes expression. Modulates fat storage by down-regulating the expression of key genes involved in adipocyte lipolysis, thermogenesis and oxidative metabolism. The polypeptide is SERTA domain-containing protein 2 (Sertad2) (Mus musculus (Mouse)).